A 1373-amino-acid chain; its full sequence is MVSLRDNIEAQPLSHNRRIRKNFGHINLVADIPNLIEIQKNSYEKNFLQLNIKDSERKNKGLQSILNSIFPISDSSNIANLEFVKYEFDTPKYDVEECSQRSLSYAAPLKVTLRLSIWDIDEDTGTREIKGIKEQEVYMGDIPLMTKNGTFIINGTERVVVSQMHRSPGVFFYHDEGKVHSSGKLLYSARVIPYRGSWLDLEFDAKDVIYFRIDRKRKLYATTLLRAIGMSTEEIIKFYYNSVTYKLVKNKGWAVKFIPQHITAHRLTSDLVDADTGNVLLKAGQKITPRLAKKYFGEGLNNILVAHETLIGKYLSEDLRDPASDEVLAKIGEMITSDMLNVINDLKIKNVNVLVINPQSGPYIRNTLFADKNQDREAALCDIFRVLRPGEPANIEAAENLFYNLFFDAERYDLSEVGRIKMNSRLELNISEEVTVLTIDDIKNIVRVLVELKDGKGIIDDIDHLGNRRVRSVGELIENQFRIGLVRMEKSVIERMSAGDVDTVMPHDLVNSKILVSVVKEFFSTSQLSQFMDQTNPLSEITHKRRLSALGPGGLSRDRAGFEVRDVHPTHYGRICPIETPEGQNIGLINSMATYARINKHGFIESPYRRVKDRHVTDEVVYLSAIEEGKYKIGQANSKVDKDGKLQGEFINCRVEGGNFVMVEPQEVDFIDVTPMQVVSVAASLIPFLENDDANRALMGSNMQRQAVPLIKTDAPFVGTGVEGVVAKDSGASVLALHDGIVEQVDSNRIVIRTLEQKIDGSPSVDIYNLLKFQKSNHNTCINQKPLVKVGHYVKKNDIIADGPSTDNGEIALGRNVLVAFLPWNGYNFEDSILISERIVKEDVFTSIHIEEFEVIARDTRLGPEEITRDIPNVSEEALRHLDEVGIIYVGAEVKAGDILVGKVTPKSESPITPEEKLLRAIFGEKAFDVKDSSLHVPSGVSGTVVEVRVFSRRGVEKDQRAIAIEKQQIEKLAKDRDDELEIIEHFVFSWLEKLLIGQVIVNGPKQVKAGQTITSEMLKGLSKGQFWQLTVEDANVMNEIEQIKVHYDEKKDALDKRFATKVEKLQSGDDLPQGALKVVKVFIATKHKLQPGDKMAGRHGNKGVISRIVPEEDMPFLEDGTVVDIVLNPLGLPSRMNIGQILETHLGWASINLAKKISTLVKEYKNKHIGIEQIKKFLLELYGENINYILERSEEEIISFCNKVSKGVHFATPVFDGAKVQDVKDMLKLAGQDPSGQVKLIDGRTGEYFDRLVTVGQKYLLKLHHLVDNKIHSRSIGPYSLVTQQPLGGKSHFGGQRFGEMECWALQAYGAAYTLQEMLTVKSDDVNGRIKTYDSIVRGENNFESGIPESFNVMIKEFRSLCLNVKLEVTSS.

Belongs to the RNA polymerase beta chain family. As to quaternary structure, the RNAP catalytic core consists of 2 alpha, 1 beta, 1 beta' and 1 omega subunit. When a sigma factor is associated with the core the holoenzyme is formed, which can initiate transcription.

It catalyses the reaction RNA(n) + a ribonucleoside 5'-triphosphate = RNA(n+1) + diphosphate. DNA-dependent RNA polymerase catalyzes the transcription of DNA into RNA using the four ribonucleoside triphosphates as substrates. In Rickettsia felis (strain ATCC VR-1525 / URRWXCal2) (Rickettsia azadi), this protein is DNA-directed RNA polymerase subunit beta.